Here is a 99-residue protein sequence, read N- to C-terminus: ATP-dependent Clp protease adapter protein ClpS (99 aa).

It belongs to the ClpS family. As to quaternary structure, binds to the N-terminal domain of the chaperone ClpA.

Involved in the modulation of the specificity of the ClpAP-mediated ATP-dependent protein degradation. This Helicobacter hepaticus (strain ATCC 51449 / 3B1) protein is ATP-dependent Clp protease adapter protein ClpS.